The primary structure comprises 277 residues: Ethanolamine ammonia-lyase small subunit (277 aa).

3 residues coordinate adenosylcob(III)alamin: Val-164, Glu-185, and Cys-214.

The protein belongs to the EutC family. The basic unit is a heterodimer which dimerizes to form tetramers. The heterotetramers trimerize; 6 large subunits form a core ring with 6 small subunits projecting outwards. Requires adenosylcob(III)alamin as cofactor.

The protein localises to the bacterial microcompartment. It catalyses the reaction ethanolamine = acetaldehyde + NH4(+). It functions in the pathway amine and polyamine degradation; ethanolamine degradation. Catalyzes the deamination of various vicinal amino-alcohols to oxo compounds. Allows this organism to utilize ethanolamine as the sole source of nitrogen and carbon in the presence of external vitamin B12. The protein is Ethanolamine ammonia-lyase small subunit of Pseudomonas fluorescens (strain SBW25).